We begin with the raw amino-acid sequence, 188 residues long: HTH-type transcriptional regulator LmrA (188 aa).

Residues 4-64 form the HTH tetR-type domain; the sequence is GDSREKILSA…IEAVNEMKEY (61 aa). The segment at residues 27 to 46 is a DNA-binding region (H-T-H motif); that stretch reads GLNQIIKESGAPKGSLYYHF.

Functionally, acts as a repressor of the lincomycin-resistance (lmrAB) and yxaGH operons. The sequence is that of HTH-type transcriptional regulator LmrA (lmrA) from Bacillus subtilis (strain 168).